Consider the following 235-residue polypeptide: Uridylate kinase (235 aa).

Residue 9-12 (KLSG) participates in ATP binding. Residues 17 to 22 (GNQGYG) form an involved in allosteric activation by GTP region. G51 lines the UMP pocket. Residues G52 and R56 each contribute to the ATP site. UMP contacts are provided by residues D71 and 132 to 139 (CGNPFFTT). ATP is bound by residues T159, Y165, and D168.

It belongs to the UMP kinase family. Homohexamer.

The protein localises to the cytoplasm. It catalyses the reaction UMP + ATP = UDP + ADP. It functions in the pathway pyrimidine metabolism; CTP biosynthesis via de novo pathway; UDP from UMP (UMPK route): step 1/1. Its activity is regulated as follows. Allosterically activated by GTP. Inhibited by UTP. In terms of biological role, catalyzes the reversible phosphorylation of UMP to UDP. The protein is Uridylate kinase of Synechococcus sp. (strain CC9311).